We begin with the raw amino-acid sequence, 456 residues long: Anthocyanidin 3-O-galactosyltransferase F3GT1 (456 aa).

An anthocyanidin is bound by residues Ser-20, His-22, and Gln-83. His-22 (proton acceptor) is an active-site residue. The active-site Charge relay is Asp-118. His-150 provides a ligand contact to an anthocyanidin. The UDP site is built by Ser-281, Trp-333, Ala-334, His-351, Asn-355, Ser-356, and Glu-359. Gly-374 is an an anthocyanidin binding site.

It belongs to the UDP-glycosyltransferase family. As to expression, expressed at low levels in stems and leaves. Expressed in ovaries.

The catalysed reaction is cyanidin + UDP-alpha-D-galactose = cyanidin 3-O-beta-D-galactoside + UDP + H(+). The protein operates within pigment biosynthesis; anthocyanin biosynthesis. Functionally, involved in anthocyanin biosynthesis by catalyzing the galactosylation of cyanidin. Required for the accumulation of anthocyanin in red-fleshed kiwifruit varieties. Seems to be the key enzyme regulating the accumulation of anthocyanin in red-fleshed kiwi fruits. In Actinidia chinensis var. chinensis (Chinese soft-hair kiwi), this protein is Anthocyanidin 3-O-galactosyltransferase F3GT1.